Here is a 394-residue protein sequence, read N- to C-terminus: Probable fatty acyl-CoA transferase Rv3272 (394 aa).

Asp-175 (nucleophile) is an active-site residue.

The protein belongs to the CoA-transferase III family. Homodimer.

Functionally, probably involved in fatty acid metabolism. Binds to fatty acyl-CoAs of varying carbon chain lengths, with the highest binding affinity for palmitoyl-CoA (C16:0). In vitro, alters the cell wall lipid profile and protects mycobacteria from acidic, oxidative and antibiotic stress. May play a significant role in host-pathogen interaction. The polypeptide is Probable fatty acyl-CoA transferase Rv3272 (Mycobacterium tuberculosis (strain ATCC 25618 / H37Rv)).